A 208-amino-acid polypeptide reads, in one-letter code: Small ribosomal subunit protein uS4 (208 aa).

Positions 98 to 161 (RRLDNTIYRL…RQSPIILEAQ (64 aa)) constitute an S4 RNA-binding domain.

Belongs to the universal ribosomal protein uS4 family. In terms of assembly, part of the 30S ribosomal subunit. Contacts protein S5. The interaction surface between S4 and S5 is involved in control of translational fidelity.

Its function is as follows. One of the primary rRNA binding proteins, it binds directly to 16S rRNA where it nucleates assembly of the body of the 30S subunit. Functionally, with S5 and S12 plays an important role in translational accuracy. The chain is Small ribosomal subunit protein uS4 from Solidesulfovibrio magneticus (strain ATCC 700980 / DSM 13731 / RS-1) (Desulfovibrio magneticus).